The following is a 233-amino-acid chain: tRNA (guanine-N(7)-)-methyltransferase (233 aa).

The segment at 1 to 21 (MTEESHPLRGAGNFFGRRHGK) is disordered. Residues E64, E89, D116, and D138 each coordinate S-adenosyl-L-methionine. D138 is an active-site residue. Substrate contacts are provided by residues K142, D174, and 212–215 (TRYE).

Belongs to the class I-like SAM-binding methyltransferase superfamily. TrmB family.

The catalysed reaction is guanosine(46) in tRNA + S-adenosyl-L-methionine = N(7)-methylguanosine(46) in tRNA + S-adenosyl-L-homocysteine. It participates in tRNA modification; N(7)-methylguanine-tRNA biosynthesis. In terms of biological role, catalyzes the formation of N(7)-methylguanine at position 46 (m7G46) in tRNA. This Brucella anthropi (strain ATCC 49188 / DSM 6882 / CCUG 24695 / JCM 21032 / LMG 3331 / NBRC 15819 / NCTC 12168 / Alc 37) (Ochrobactrum anthropi) protein is tRNA (guanine-N(7)-)-methyltransferase.